The sequence spans 221 residues: Glutathione S-transferase (221 aa).

The region spanning 3–83 (GKPVLHYANT…YIAGKYNLYG (81 aa)) is the GST N-terminal domain. Glutathione is bound by residues Tyr-9, Lys-45, 54–55 (QV), and 67–68 (QT). In terms of domain architecture, GST C-terminal spans 85 to 208 (DLKERALIDM…QPGSQRKPRL (124 aa)).

Belongs to the GST superfamily. Alpha family. Homodimer or heterodimer of GSTA1 and GSTA2.

The enzyme catalyses RX + glutathione = an S-substituted glutathione + a halide anion + H(+). It catalyses the reaction prostaglandin A2 + glutathione = prostaglandin A2-S-(R)-glutathione. It carries out the reaction prostaglandin J2 + glutathione = prostaglandin J2-S-(R)-glutathione. The catalysed reaction is (13S)-hydroperoxy-(9Z,11E)-octadecadienoate + 2 glutathione = (13S)-hydroxy-(9Z,11E)-octadecadienoate + glutathione disulfide + H2O. The enzyme catalyses androst-5-ene-3,17-dione = androst-4-ene-3,17-dione. Its function is as follows. Glutathione S-transferase that catalyzes the nucleophilic attack of the sulfur atom of glutathione on the electrophilic groups of a wide range of exogenous and endogenous compounds. Involved in the formation of glutathione conjugates of both prostaglandin A2 (PGA2) and prostaglandin J2 (PGJ2). It also catalyzes the isomerization of D5-androstene-3,17-dione (AD) into D4-androstene-3,17-dione and may therefore play an important role in hormone biosynthesis. Through its glutathione-dependent peroxidase activity toward the fatty acid hydroperoxide (13S)-hydroperoxy-(9Z,11E)-octadecadienoate/13-HPODE it is also involved in the metabolism of oxidized linoleic acid. This Gallus gallus (Chicken) protein is Glutathione S-transferase.